The following is a 487-amino-acid chain: GTPase Der (487 aa).

2 consecutive EngA-type G domains span residues P3–A166 and I193–V366. Residues G9–S16, D56–I60, N118–D121, G199–S206, D246–V250, and N311–D314 contribute to the GTP site. In terms of domain architecture, KH-like spans T367 to E451. Positions K448–L461 are enriched in basic and acidic residues. Residues K448 to R487 form a disordered region. Residues N467–R487 are compositionally biased toward basic residues.

This sequence belongs to the TRAFAC class TrmE-Era-EngA-EngB-Septin-like GTPase superfamily. EngA (Der) GTPase family. Associates with the 50S ribosomal subunit.

In terms of biological role, GTPase that plays an essential role in the late steps of ribosome biogenesis. This chain is GTPase Der, found in Pseudomonas putida (strain ATCC 700007 / DSM 6899 / JCM 31910 / BCRC 17059 / LMG 24140 / F1).